The primary structure comprises 280 residues: Energy-coupling factor transporter ATP-binding protein EcfA1 (280 aa).

Positions 7-241 (IEVAHLKYEY…GQRLLDLGLD (235 aa)) constitute an ABC transporter domain. 41-48 (GHNGSGKS) is a binding site for ATP.

Belongs to the ABC transporter superfamily. Energy-coupling factor EcfA family. Forms a stable energy-coupling factor (ECF) transporter complex composed of 2 membrane-embedded substrate-binding proteins (S component), 2 ATP-binding proteins (A component) and 2 transmembrane proteins (T component).

Its subcellular location is the cell membrane. Functionally, ATP-binding (A) component of a common energy-coupling factor (ECF) ABC-transporter complex. Unlike classic ABC transporters this ECF transporter provides the energy necessary to transport a number of different substrates. The chain is Energy-coupling factor transporter ATP-binding protein EcfA1 from Latilactobacillus sakei subsp. sakei (strain 23K) (Lactobacillus sakei subsp. sakei).